The chain runs to 421 residues: Protein PHLOEM UNLOADING MODULATOR (421 aa).

7 helical membrane passes run 30–50 (LMPVLWSVLAIAVVTRVLFYK), 60–80 (IPFLGSIVFLLCALLFEALCV), 124–144 (HIIGLHHFLMLFIMLGFSVVF), 158–178 (YIFTMGVGRLLRAITFVSTIL), 286–306 (AMAWTEAYGGFSSAMIWLFVA), 323–343 (CIVAIYVGILLWKMTGFIWSA), and 397–417 (TVFACATVITTLTIVILALTL).

The protein belongs to the sphingomyelin synthase family.

It localises to the membrane. The protein operates within sphingolipid metabolism. Functionally, catalyzes the biosynthesis of sphingolipids with very long-chain fatty acid (VLCFA). Required for the formation of plasmodesmal cytoplasmic sleeve during the transition from type I to type II plasmodesmata to modulate post-sieve elements (SE) unloading and symplastic cell-to-cell molecular trafficking at the phloem pole pericycle (PPP)-endodermis interface in roots. This is Protein PHLOEM UNLOADING MODULATOR from Arabidopsis thaliana (Mouse-ear cress).